The sequence spans 580 residues: 9,13-epoxylabda-14-ene synthase, chloroplastic (580 aa).

A chloroplast-targeting transit peptide spans 1 to 32 (MSITFNLKIAPFSGPGIQRSKETFPATEIQIT). Mg(2+) contacts are provided by Asp322, Asp326, Asn466, Thr470, and Glu474. Residues 322–326 (DDFFD) carry the DDXXD motif motif.

The protein belongs to the terpene synthase family. It depends on Mg(2+) as a cofactor. In terms of tissue distribution, present in both leaves and flowers, with higher levels in leaves.

It localises to the plastid. It is found in the chloroplast. It carries out the reaction peregrinol diphosphate = (13R)-9,13-epoxylabd-14-ene + diphosphate. The enzyme catalyses (+)-copalyl diphosphate = miltiradiene + diphosphate. It catalyses the reaction 8-hydroxycopalyl diphosphate = (13R)-manoyl oxide + diphosphate. It functions in the pathway secondary metabolite biosynthesis; terpenoid biosynthesis. Functionally, involved in the biosynthesis of labdane-type diterpenoid including marrubiin and other labdane-related furanoid diterpenoids with potential applications as anti-diabetics, analgesics or vasorelaxants. Terpene synthase the catalyzes the conversion of peregrinol diphosphate to 9,13(R)-epoxy-labd-14-ene, from (+)-copalyl diphosphate ((+)-CPP) to miltiradiene and from 8-hydroxycopalyl diphosphate (LPP, labda-13-en-8-ol diphosphate) to manoyl oxide. In Marrubium vulgare (White horehound), this protein is 9,13-epoxylabda-14-ene synthase, chloroplastic.